The primary structure comprises 515 residues: ADP,ATP carrier protein 1 (515 aa).

A run of 12 helical transmembrane segments spans residues 24 to 44 (LKKV…YTVL), 62 to 82 (AIPF…MLIY), 93 to 113 (ALFY…PTVI), 124 to 144 (EFAD…VAIL), 149 to 169 (FAAF…LMFW), 184 to 204 (FYAL…RAIV), 226 to 246 (LLMA…WWIN), 286 to 306 (YILL…LIEV), 329 to 349 (FSFW…GNVI), 358 to 378 (ALVT…LVIF), 383 to 403 (SGLV…VGAI), and 465 to 485 (IGAM…IWLV).

This sequence belongs to the ADP/ATP translocase tlc family.

It localises to the cell membrane. This Chlamydia pneumoniae (Chlamydophila pneumoniae) protein is ADP,ATP carrier protein 1 (tlcA).